Reading from the N-terminus, the 487-residue chain is Siroheme synthase (487 aa).

The precorrin-2 dehydrogenase /sirohydrochlorin ferrochelatase stretch occupies residues 1–203; sequence MNTFPLFFKL…GRSVEAEQAL (203 aa). Residues 22–23 and 43–44 each bind NAD(+); these read EV and PQ. Position 128 is a phosphoserine (Ser128). Residues 229 to 487 are uroporphyrinogen-III C-methyltransferase; the sequence is GEVYIVGAGP…DQQAHALNML (259 aa). Pro238 contributes to the S-adenosyl-L-methionine binding site. Asp261 functions as the Proton acceptor in the catalytic mechanism. The active-site Proton donor is the Lys283. S-adenosyl-L-methionine-binding positions include 314-316, Val319, 344-345, Met396, and Ala425; these read GGD and TA.

The protein in the N-terminal section; belongs to the precorrin-2 dehydrogenase / sirohydrochlorin ferrochelatase family. This sequence in the C-terminal section; belongs to the precorrin methyltransferase family.

It catalyses the reaction uroporphyrinogen III + 2 S-adenosyl-L-methionine = precorrin-2 + 2 S-adenosyl-L-homocysteine + H(+). The enzyme catalyses precorrin-2 + NAD(+) = sirohydrochlorin + NADH + 2 H(+). The catalysed reaction is siroheme + 2 H(+) = sirohydrochlorin + Fe(2+). It functions in the pathway cofactor biosynthesis; adenosylcobalamin biosynthesis; precorrin-2 from uroporphyrinogen III: step 1/1. It participates in cofactor biosynthesis; adenosylcobalamin biosynthesis; sirohydrochlorin from precorrin-2: step 1/1. Its pathway is porphyrin-containing compound metabolism; siroheme biosynthesis; precorrin-2 from uroporphyrinogen III: step 1/1. The protein operates within porphyrin-containing compound metabolism; siroheme biosynthesis; siroheme from sirohydrochlorin: step 1/1. It functions in the pathway porphyrin-containing compound metabolism; siroheme biosynthesis; sirohydrochlorin from precorrin-2: step 1/1. Multifunctional enzyme that catalyzes the SAM-dependent methylations of uroporphyrinogen III at position C-2 and C-7 to form precorrin-2 via precorrin-1. Then it catalyzes the NAD-dependent ring dehydrogenation of precorrin-2 to yield sirohydrochlorin. Finally, it catalyzes the ferrochelation of sirohydrochlorin to yield siroheme. This Psychrobacter sp. (strain PRwf-1) protein is Siroheme synthase.